The following is a 1403-amino-acid chain: Sushi, nidogen and EGF-like domain-containing protein 1 (1403 aa).

A signal peptide spans 1–24 (MRLGAAWALLLAAALGLGTRGVRA). The region spanning 103–258 (AFWADVDNRR…GRWAFRIDDA (156 aa)) is the NIDO domain. 3 EGF-like domains span residues 268–309 (TTSV…RRCH), 311–347 (DVNECASHPCQNGGTCTHGVNSFSCQCPAGFKGPTCE), and 349–385 (AQSPCDNKVCQNGGQCQAESSSAVCVCQAGYTGATCE). 18 disulfide bridges follow: Cys272-Cys284, Cys278-Cys297, Cys299-Cys308, Cys315-Cys326, Cys320-Cys335, Cys337-Cys346, Cys353-Cys364, Cys358-Cys373, Cys375-Cys384, Cys391-Cys402, Cys396-Cys411, Cys413-Cys422, Cys433-Cys444, Cys438-Cys453, Cys455-Cys464, Cys472-Cys480, Cys474-Cys488, and Cys490-Cys499. Asn292 carries an N-linked (GlcNAc...) asparagine glycan. The EGF-like 4; calcium-binding domain maps to 387–423 (DVDECSSDPCQNGGSCVDLVGNYSCICVEPFEGPQCE). N-linked (GlcNAc...) asparagine glycosylation occurs at Asn408. 2 consecutive EGF-like domains span residues 429–465 (VPSPCLSNPCQNGGTCVDADEGYVCECPEGFMGLDCR) and 468–500 (ILNDCDCRNGGRCLGANTTLCQCPPGFFGLLCE). The N-linked (GlcNAc...) asparagine glycan is linked to Asn484. N-linked (GlcNAc...) asparagine glycosylation occurs at Asn536. EGF-like domains are found at residues 541-577 (LPSPCDSDPCFNGGSCDAHEDSYTCECPRGFHGRHCE), 580-616 (RPHLCSSGPCRNGGTCKEMGDEYRCTCPYRFTGRHCE), 619-655 (KPDSCASGPCHNGGTCFHYIGKYKCDCPPGFSGRHCE), and 657-693 (APSPCFRSPCMNGGTCEDLGTDFSCYCQPGYTGHRCQ). Intrachain disulfides connect Cys545/Cys556, Cys550/Cys565, Cys567/Cys576, Cys584/Cys595, Cys589/Cys604, Cys606/Cys615, Cys623/Cys634, Cys628/Cys643, Cys645/Cys654, Cys661/Cys672, Cys666/Cys681, Cys683/Cys692, Cys698/Cys739, Cys724/Cys751, Cys757/Cys768, Cys762/Cys777, Cys779/Cys788, Cys795/Cys806, Cys800/Cys815, Cys817/Cys826, Cys833/Cys844, Cys838/Cys853, Cys855/Cys864, Cys871/Cys882, Cys876/Cys891, and Cys893/Cys902. The region spanning 696 to 753 (VDCGHPEEVEHATMRFNGTHVGSVALYTCEPGFSLSALSHIRVCQPQGVWSQPPQCIE) is the Sushi domain. The N-linked (GlcNAc...) asparagine glycan is linked to Asn712. Residues 753-789 (EVDECRSQPCLHGGSCQDLIADYQCLCSPGYEGVHCE) enclose the EGF-like 11; calcium-binding domain. The EGF-like 12; calcium-binding domain maps to 791 to 827 (ETDECQAQPCRNGGSCRDLPRAFICQCPEGFVGIHCE). 2 EGF-like domains span residues 829-865 (EVDACASSPCQHGGRCEDGGGAYLCVCPEGFFGYNCE) and 867-903 (VSDPCFSSPCGSRGYCLASNGSHSCTCKVGYTGKDCT). A glycan (N-linked (GlcNAc...) asparagine) is linked at Asn886. 3 consecutive Fibronectin type-III domains span residues 908-1006 (PPTA…TRPR), 1007-1105 (PIED…TRPL), and 1106-1200 (PPAN…SPRD). N-linked (GlcNAc...) asparagine glycosylation is found at Asn977, Asn1015, Asn1109, Asn1139, and Asn1298. One can recognise an EGF-like 15 domain in the interval 1306–1342 (TPGSCSEDACQNGGTCVPGADAHSCDCRPGFKGRHCE). Intrachain disulfides connect Cys1310–Cys1321, Cys1315–Cys1330, and Cys1332–Cys1341.

Phosphorylated on serine and threonine residues. In terms of processing, N-glycosylated. As to expression, expressed in lung.

The protein localises to the secreted. It is found in the extracellular space. The protein resides in the extracellular matrix. In Mus musculus (Mouse), this protein is Sushi, nidogen and EGF-like domain-containing protein 1.